The sequence spans 153 residues: MDQETVGNIVLLAIVTLISVVQNGFFAHKVEHESKTHNGRSFQRTGPLAFERVYTANQNCVDAYPTFLVMLWSAGLLCSQVPAAFAGLMYLFVRQKYFVGYLGERTQSTPGYIFGKRIILFLFAMSLAGILNYFLIAFFGSDFENYIKTVTTT.

At 1–8 the chain is on the lumenal side; that stretch reads MDQETVGN. The chain crosses the membrane as a helical span at residues 9-30; it reads IVLLAIVTLISVVQNGFFAHKV. Over 31–52 the chain is Cytoplasmic; it reads EHESKTHNGRSFQRTGPLAFER. The chain crosses the membrane as a helical span at residues 53-77; that stretch reads VYTANQNCVDAYPTFLVMLWSAGLL. The Lumenal segment spans residues 78–80; the sequence is CSQ. A helical membrane pass occupies residues 81-102; that stretch reads VPAAFAGLMYLFVRQKYFVGYL. Topologically, residues 103 to 107 are cytoplasmic; that stretch reads GERTQ. The stretch at 108–115 is an intramembrane region; sequence STPGYIFG. A helical membrane pass occupies residues 116 to 128; sequence KRIILFLFAMSLA. Residues 129–153 are Lumenal-facing; it reads GILNYFLIAFFGSDFENYIKTVTTT.

Belongs to the MAPEG family. Homotrimer. Interacts with LTC4S and ALOX5.

The protein resides in the nucleus membrane. The protein localises to the endoplasmic reticulum membrane. Required for leukotriene biosynthesis by ALOX5 (5-lipoxygenase). Anchors ALOX5 to the membrane. Binds arachidonic acid, and could play an essential role in the transfer of arachidonic acid to ALOX5. Binds to MK-886, a compound that blocks the biosynthesis of leukotrienes. The protein is Arachidonate 5-lipoxygenase-activating protein (ALOX5AP) of Ovis aries (Sheep).